The primary structure comprises 255 residues: 1-(5-phosphoribosyl)-5-[(5-phosphoribosylamino)methylideneamino] imidazole-4-carboxamide isomerase (255 aa).

Catalysis depends on aspartate 8, which acts as the Proton acceptor. Catalysis depends on aspartate 129, which acts as the Proton donor.

It belongs to the HisA/HisF family.

It localises to the cytoplasm. It catalyses the reaction 1-(5-phospho-beta-D-ribosyl)-5-[(5-phospho-beta-D-ribosylamino)methylideneamino]imidazole-4-carboxamide = 5-[(5-phospho-1-deoxy-D-ribulos-1-ylimino)methylamino]-1-(5-phospho-beta-D-ribosyl)imidazole-4-carboxamide. The protein operates within amino-acid biosynthesis; L-histidine biosynthesis; L-histidine from 5-phospho-alpha-D-ribose 1-diphosphate: step 4/9. In Prochlorococcus marinus (strain AS9601), this protein is 1-(5-phosphoribosyl)-5-[(5-phosphoribosylamino)methylideneamino] imidazole-4-carboxamide isomerase.